Here is a 178-residue protein sequence, read N- to C-terminus: Cytochrome b6-f complex iron-sulfur subunit (178 aa).

The chain crosses the membrane as a helical span at residues Leu-20 to Ile-42. The Rieske domain maps to Ala-65–Val-161. [2Fe-2S] cluster contacts are provided by Cys-107, His-109, Cys-125, and His-128. A disulfide bond links Cys-112 and Cys-127.

It belongs to the Rieske iron-sulfur protein family. As to quaternary structure, the 4 large subunits of the cytochrome b6-f complex are cytochrome b6, subunit IV (17 kDa polypeptide, PetD), cytochrome f and the Rieske protein, while the 4 small subunits are PetG, PetL, PetM and PetN. The complex functions as a dimer. Requires [2Fe-2S] cluster as cofactor.

It is found in the cellular thylakoid membrane. It carries out the reaction 2 oxidized [plastocyanin] + a plastoquinol + 2 H(+)(in) = 2 reduced [plastocyanin] + a plastoquinone + 4 H(+)(out). In terms of biological role, component of the cytochrome b6-f complex, which mediates electron transfer between photosystem II (PSII) and photosystem I (PSI), cyclic electron flow around PSI, and state transitions. This is Cytochrome b6-f complex iron-sulfur subunit from Synechococcus sp. (strain RCC307).